The following is a 151-amino-acid chain: Guanylate kinase homolog (151 aa).

One can recognise a Guanylate kinase-like domain in the interval 1–141 (MEREGVDYHY…AYSKLIQILQ (141 aa)).

Belongs to the guanylate kinase family.

This Vaccinia virus (strain Copenhagen) (VACV) protein is Guanylate kinase homolog.